The sequence spans 750 residues: Retron Eco8 OLD nuclease (750 aa).

Positions 1 to 173 (MTIESIRVKN…IDLYDWNPIW (173 aa)) are ATPase domain N-terminus. 33-37 (NVGKS) is an ATP binding site. A dimerization domain region spans residues 174–260 (KLISNLNSFN…TQSDGTNSNK (87 aa)). The ATPase domain C-terminus stretch occupies residues 261–390 (FLETLLHLLI…FSDNEARLFF (130 aa)). Residues 391–704 (SEYIVFVEGA…SGWVTTFLNY (314 aa)) form a toprim domain region. 6 residues coordinate a divalent metal cation: Glu398, Glu402, Asp450, Asp452, Ser623, and Glu641.

It belongs to the class 1 OLD nuclease family. In terms of assembly, homodimer. Requires a divalent metal cation as cofactor.

Functionally, probable nuclease member of antiviral defense system retron Eco8, composed of an reverse transcriptase (RT), this nuclease and a non-coding RNA (ncRNA) encoded between them. Expression of retron Eco8 confers protection against bacteriophages T4, T6, T7 and SECphi4, SECphi6 and SECphi18. At multiplicity of infection (MOI) of 0.02 cultures slow growth when infected with SECphi4 but do not collapse, at MOI 2 cultures collapse. When the retron is cloned in another E.coli strain synthesizes msDNA (a branched RNA linked by a 2',5'-phosphodiester bond to a single-stranded DNA). The retron transcript serves as primer and template to the reaction, and codes for the RT. In Escherichia coli, this protein is Retron Eco8 OLD nuclease.